We begin with the raw amino-acid sequence, 309 residues long: tRNA dimethylallyltransferase (309 aa).

13-20 (GPTAVGKS) contributes to the ATP binding site. 15–20 (TAVGKS) contacts substrate.

The protein belongs to the IPP transferase family. Monomer. Mg(2+) serves as cofactor.

It carries out the reaction adenosine(37) in tRNA + dimethylallyl diphosphate = N(6)-dimethylallyladenosine(37) in tRNA + diphosphate. Functionally, catalyzes the transfer of a dimethylallyl group onto the adenine at position 37 in tRNAs that read codons beginning with uridine, leading to the formation of N6-(dimethylallyl)adenosine (i(6)A). The polypeptide is tRNA dimethylallyltransferase (Lacticaseibacillus casei (strain BL23) (Lactobacillus casei)).